The sequence spans 34 residues: uncharacterized protein (34 aa).

This is an uncharacterized protein from Escherichia coli (Bacteriophage T4).